Here is a 1325-residue protein sequence, read N- to C-terminus: MEAVSRVFPALAGQAPEEQGEIIKVKVKEEDHTWDQESALRRNLSYTRELSRQRFRQFCYQETPGPREALSQLRELCRQWLNPEIHTKEQILELLVLEQFLTILPEELQSWVREHNPESGEEVVTLLEDLERELDEPRQQVSQGTYGQEVSMEEMIPLDSAKESLGTQLQSMEDRMECESPEPHPLQDNGSFLWFSMMSQSMGGDNLSSLDTNEAEIEPENMREKFFRSLARLLENKSNNTKIFSKAKYCQLIKEVKEAKAKAKKESVDYRRLARFDVILVQGNEKLIEAVNGETDKIRYYLHSEDLFDILHNTHLSIGHGGRTRMEKELQAKYKNITKEVIMLYLTLCKPCQQKNSKLKKVLTSKSIKEVSSRCQVDLIDMQLNPDGEYRFILHYQDLCTKLTFLRSLKSKRPTEVAHALLDIFTIIGAPSVLQSDNGREFSSQVVSELSNIWPELKIVHGKSQTCQSQSSAEQTEDIRKRIFSWMQTNNSSHWTEFLWFIQMSQNQPYHRSMQQTPCESAFSSEAKLGLSHSQLTEELVASLHTENELDQADKELENTLRAQYEENIETGTDSSDIEENLSVTPKVAEKSPPESRLRFLSCVVCEKECTGVNSCISCDGNIHAICGVPSQHGTEGCGRQITCSLCYETSTMKRKHDEIQRSLPVKPSKMLKPSGTPFSPDKVGDWMAKQASLDFFVKKRHAFSEHSSSNKRNVNNRSYPEEGKTKRVHASFTRKYDPSYIEFGFVAVIDGEVLKPQCIICGDVLANEAMKPSKLKRHLYSKHKEISSQPKEFFERKSSELKSQPKQVFNVSHINISALRASYKVALPVAKSKTPYTIAETLVKDCIKEVCLEMLGESAAKKVAQVPLSNDTIARRIQELANDMEDQLIEQIKLAKYFSLQLDECRDIANMIILLVYVRFEHDDDIKEEFFFSASLPTNTTSSELYEAVKNYIVNKCGLEFKFCVGVCSDGAASMTGKHSEVVTQIKELAPECKTTHCFIHRESLAMKKISAELNSVLNDIVKIVNYIKSNSLNSRLFSLLCDNMEADHKQLLLHAEIRWLSRGKVLSRMFEIRNELLVFLQGKKPMWSQLFKDVNWTARLAYLSDIFSIFNDLNASMQGKNATYFSMADKVEGQKQKLEAWKNRISTDCYDMFHNLTTIINEVGNDLDIAHLRKVISEHLTNLLECFEFYFPSKEDPRIGNLWIQNPFLSSKDNLNLTVTLQDKLLKLATDEGLKISFENTASLPSFWIKAKNDYPELAEIALKLLLLFPSTYLCETGFSTLSVIKTKHRNSLNIHYPLRVALSSIQPRLDKLTSKKQAHLSH.

An SCAN box domain is found at 52 to 134; that stretch reads RQRFRQFCYQ…TLLEDLEREL (83 aa). Residues 246–275 are a coiled coil; that stretch reads KAKYCQLIKEVKEAKAKAKKESVDYRRLAR. An Integrase catalytic domain is found at 366 to 526; that stretch reads KSIKEVSSRC…TPCESAFSSE (161 aa). A coiled-coil region spans residues 542–568; the sequence is ASLHTENELDQADKELENTLRAQYEEN.

Weakly expressed in the lung (at protein level).

The protein resides in the nucleus. The polypeptide is SCAN domain-containing protein 3 (Homo sapiens (Human)).